The following is a 294-amino-acid chain: MRFVIVTGLSGAGKTQAIRSLEDLGFFCVDNLPPTLIPKFAEACYQTEGKIKKIALVIDIRGGKFFDDLFESLKYLKEEGYKYEILFLDASDEVLIKRFKESRRKHPLSPDGRILNGISMERNRLREVKDRADNIINTSELATRELREAINEIYGEQDQIENQLVITVLSFGFKYGIPLDSDLVFDVRFLPNPYYIKELKQYSGKDKKVSDYVMSFDVTNKFVNRLEDMLNFLIPNYFKEGKRQLIICIGCTGGRHRSVAIANTIYEGLKSKGHKVNIDHRDINEDIHKGGKKL.

Position 8-15 (8-15) interacts with ATP; it reads GLSGAGKT. Residue 59 to 62 participates in GTP binding; it reads DIRG.

The protein belongs to the RapZ-like family.

In terms of biological role, displays ATPase and GTPase activities. The sequence is that of Nucleotide-binding protein CLJ_B3680 from Clostridium botulinum (strain 657 / Type Ba4).